We begin with the raw amino-acid sequence, 217 residues long: Trimethylamine corrinoid protein 2 (217 aa).

Residues 1–92 (MAGKEEIIAK…EMEKRKAKTT (92 aa)) enclose the B12-binding N-terminal domain. The B12-binding domain maps to 94 to 217 (LGTVIIGTIE…VNKIKAAIKS (124 aa)). His-107 is a methylcob(III)alamin binding site.

This sequence belongs to the methylamine corrinoid protein family. Can form a complex with MttB.

It participates in one-carbon metabolism; methanogenesis from trimethylamine. In terms of biological role, acts probably as a methyl group carrier between MttB and either MtbA or MtaA. This is Trimethylamine corrinoid protein 2 (mttC2) from Methanosarcina acetivorans (strain ATCC 35395 / DSM 2834 / JCM 12185 / C2A).